The primary structure comprises 43 residues: Neurotrophic factor BDNF (43 aa).

This sequence belongs to the NGF-beta family.

Its subcellular location is the secreted. Functionally, promotes the survival of neuronal populations that are all located either in the central nervous system or directly connected to it. The sequence is that of Neurotrophic factor BDNF (BDNF) from Macrovipera lebetinus (Levantine viper).